A 291-amino-acid polypeptide reads, in one-letter code: MKTKIKKITKKFNLKKDTEVKPLSTQELIEEQKEFSQAVDKLMTKKQKPTFEDIGSSIVDFETSDNDKFYESVRDAIEKTSEIVDDLDQSELTKNSYEQKELSAKAIIQAALYVAGRNGMTLQELNKILPKIHQDQLFKELEEMIYSYDQNLNFGLTIKNYGGRYKILTKAAVKKDMQRYVSERFKNPLNKSLMEVLAIVAYNQPCTRVRINEIRGVDSLSLVDNLLEKGLIVEVGRADTPGRPFLYNVSEKFFDLFGIESIDDLPQIKHFDPDSYQEGDFFDSNRYDENE.

It belongs to the ScpB family. Homodimer. Homodimerization may be required to stabilize the binding of ScpA to the Smc head domains. Component of a cohesin-like complex composed of ScpA, ScpB and the Smc homodimer, in which ScpA and ScpB bind to the head domain of Smc. The presence of the three proteins is required for the association of the complex with DNA.

The protein resides in the cytoplasm. In terms of biological role, participates in chromosomal partition during cell division. May act via the formation of a condensin-like complex containing Smc and ScpA that pull DNA away from mid-cell into both cell halves. This Mycoplasmoides gallisepticum (strain R(low / passage 15 / clone 2)) (Mycoplasma gallisepticum) protein is Segregation and condensation protein B.